A 164-amino-acid chain; its full sequence is Anthrone oxygenase AgnL2 (164 aa).

Helical transmembrane passes span 11 to 31 (VVTGSFLSGAMISLSLMAVPV), 48 to 70 (RMYHYGHQVLPTMAVATTLLYAY), and 85 to 105 (VFALAGTITVSMIPFTWLCMV).

Belongs to the anthrone oxygenase family.

It is found in the membrane. The catalysed reaction is emodin anthrone + O2 = emodin + H2O + H(+). It participates in secondary metabolite biosynthesis. Functionally, anthrone oxygenase; part of the gene cluster that mediates the biosynthesis of agnestins, dihydroxy-xanthone metabolites. The pathway begins with the assembly and cyclization of atrochrysone thioester by the non-reducing polyketide synthase Agnpks1. The atrochrysone carboxyl ACP thioesterase AgnL7 then breaks the thioester bond and releases the atrochrysone carboxylic acid as the first enzyme-free intermediate. The decarboxylase AgnL1 then catalyzes the concerted decarboxylation-elimination required to convert atochrysone carboxylic acid into emodin anthrone, which is further oxidized to emodin by the anthrone oxygenase AgnL2. Emodin then undergoes reduction catalyzed by the oxidoreductase AgnL4 to yield the dihydroquinone tautomer which is the substrate for reduction by the short chain dehydrogenase AgnL6 reduction to produce hydroxyketone, followed by AgnL8 dehydration and likely spontaneous autoxidation to chrysophanol. Baeyer-Villiger oxidation by the oxidase AgnL3 leads to monodictyphenone via cleavage of the C-10/C-10a bond of chrysophanol. Alternative cleavage at the C-4a/C-10 bond of chrysophanol also leads to the formation some cephalone F. Further conversion to agnestins A and B, requires reduction to dihydro-monodictyphenone, oxidation to agnestin C probably via an epoxide, and rearrangement to either agnestin A or agnestin B directly, although agnestin A or agnestin B can also interconvert. Within the cluster, AgnR1 is the only unassigned oxidoreductase present which could be involved in this conversion. However, AgnR1 seems not to be involved in this step, and thus genes involved in the proposed oxidation/reduction may be located elsewhere on the genome. Further agnestin A derivatives are probably formed by spontaneous decarboxylations, dehydrations and methanolysis reactions. This is Anthrone oxygenase AgnL2 from Paecilomyces divaricatus (Penicillium divaricatum).